Here is a 489-residue protein sequence, read N- to C-terminus: MMEEELYKSVIVTAKSVRSVLLEETSNVEDCQKNLNALGQIVSASSQSQEYRSQILANNGLPDVLVEILNRSFQDNVPTEELKFTLYIRLMRGILLLARNLVITKQFVEFSSILSSLENFNQKVSHNNEFYSKTLVVYIQFLANMSQITREQNIVAEIVETFFKNEDLMSLIANDDQMKMPFAAFLKNILSNSDNLYDVLTHDDTILRYTISELDKADIHNEDLDQYSSLLILTFQNIIAHETYSKWLKRIDCESAEFSRIMKLNQVIVTSKEDWDNYQLTAMLAWIFDNFLVFSEISKSILLSSIYDPLELKRVHLNLIILLDCLSDLGKFEATKQFLEHYNAIEELISLLRVVHESVDRKTLKNKEKIEETVGKKEFPQVKSLIIEVIAFLVHGSFEIQEKMRELHGLELVLSNCMIDDNDPFIKERAIVCVKFLLANNEKNQQFVADLEAKQTVDDDALKEVGYEVQIEDGNVKLRKTENQKLQEI.

This sequence belongs to the ataxin-10 family.

It localises to the cytoplasm. Functionally, may play a role in the regulation of cytokinesis. The sequence is that of Ataxin-10 homolog (CTR86) from Debaryomyces hansenii (strain ATCC 36239 / CBS 767 / BCRC 21394 / JCM 1990 / NBRC 0083 / IGC 2968) (Yeast).